Reading from the N-terminus, the 272-residue chain is F-actin-capping protein subunit beta (272 aa).

Serine 2 bears the N-acetylserine mark. The residue at position 2 (serine 2) is a Phosphoserine. An N6-acetyllysine modification is found at lysine 235. Position 263 is a phosphoserine (valine 263).

This sequence belongs to the F-actin-capping protein beta subunit family. Component of the F-actin capping complex, composed of a heterodimer of an alpha and a beta subunit. Subunit of dynactin, a multiprotein complex part of a tripartite complex with dynein and a adapter, such as BICDL1, BICD2 or HOOK3. The dynactin complex is built around ACTR1A/ACTB filament and consists of an actin-related filament composed of a shoulder domain, a pointed end and a barbed end. Its length is defined by its flexible shoulder domain. The soulder is composed of 2 DCTN1 subunits, 4 DCTN2 and 2 DCTN3. The 4 DCNT2 (via N-terminus) bind the ACTR1A filament and act as molecular rulers to determine the length. The pointed end is important for binding dynein-dynactin cargo adapters. Consists of 4 subunits: ACTR10, DCNT4, DCTN5 and DCTN6. The barbed end is composed of a CAPZA1:CAPZB heterodimers, which binds ACTR1A/ACTB filament and dynactin and stabilizes dynactin. Interacts with ARHGAP17. Interaction with RCSD1/CAPZIP. Component of the WASH complex, composed of F-actin-capping protein subunit alpha (CAPZA1, CAPZA2 or CAPZA3), F-actin-capping protein subunit beta (CAPZB), WASH (WASHC1, WASH2P, WASH3P, WASH4P, WASH5P or WASH6P), WASHC2 (WASHC2A or WASHC2C), WASHC3, WASHC4 and WASHC5. Interacts with ACTG1. Directly interacts with CRACD; this interaction decreases binding to actin.

The protein resides in the cytoplasm. The protein localises to the cytoskeleton. It localises to the myofibril. Its subcellular location is the sarcomere. Functionally, F-actin-capping proteins bind in a Ca(2+)-independent manner to the fast growing ends of actin filaments (barbed end) thereby blocking the exchange of subunits at these ends. Unlike other capping proteins (such as gelsolin and severin), these proteins do not sever actin filaments. Plays a role in the regulation of cell morphology and cytoskeletal organization. Forms, with CAPZB, the barbed end of the fast growing ends of actin filaments in the dynactin complex and stabilizes dynactin structure. The dynactin multiprotein complex activates the molecular motor dynein for ultra-processive transport along microtubules. This is F-actin-capping protein subunit beta from Homo sapiens (Human).